Here is a 124-residue protein sequence, read N- to C-terminus: Fluoride-specific ion channel FluC 2 (124 aa).

4 helical membrane passes run 9-29, 34-54, 67-87, and 99-119; these read LGIF…STWL, DFPW…IFLV, LILA…SLML, and FSLV…AYFL. Na(+) contacts are provided by Gly-77 and Thr-80.

Belongs to the fluoride channel Fluc/FEX (TC 1.A.43) family.

The protein resides in the cell membrane. The enzyme catalyses fluoride(in) = fluoride(out). Its activity is regulated as follows. Na(+) is not transported, but it plays an essential structural role and its presence is essential for fluoride channel function. In terms of biological role, fluoride-specific ion channel. Important for reducing fluoride concentration in the cell, thus reducing its toxicity. The polypeptide is Fluoride-specific ion channel FluC 2 (Streptococcus pneumoniae (strain ATCC BAA-255 / R6)).